The following is a 337-amino-acid chain: Large ribosomal subunit protein uL3 (337 aa).

The tract at residues 1 to 32 is disordered; it reads MAKGHRPRRGSLAYSPRKRSQSHIPRFRSWPE.

The protein belongs to the universal ribosomal protein uL3 family. In terms of assembly, part of the 50S ribosomal subunit. Forms a cluster with proteins L14 and L24e.

Its function is as follows. One of the primary rRNA binding proteins, it binds directly near the 3'-end of the 23S rRNA, where it nucleates assembly of the 50S subunit. This is Large ribosomal subunit protein uL3 from Methanococcoides burtonii (strain DSM 6242 / NBRC 107633 / OCM 468 / ACE-M).